The following is a 198-amino-acid chain: uncharacterized protein (198 aa).

The next 4 membrane-spanning stretches (helical) occupy residues 20 to 40 (VIVG…GLWA), 70 to 90 (FFVA…TASV), 107 to 127 (LAIG…LLVW), and 164 to 184 (VAAT…VLAA).

This sequence to M.tuberculosis Rv1591.

The protein localises to the cell membrane. This is an uncharacterized protein from Mycobacterium leprae (strain TN).